The sequence spans 687 residues: Polyphosphate kinase (687 aa).

Asparagine 45 is an ATP binding site. Mg(2+) is bound by residues arginine 375 and arginine 405. Catalysis depends on histidine 435, which acts as the Phosphohistidine intermediate. ATP contacts are provided by tyrosine 472, arginine 568, and histidine 596.

It belongs to the polyphosphate kinase 1 (PPK1) family. Requires Mg(2+) as cofactor. In terms of processing, an intermediate of this reaction is the autophosphorylated ppk in which a phosphate is covalently linked to a histidine residue through a N-P bond.

The enzyme catalyses [phosphate](n) + ATP = [phosphate](n+1) + ADP. Catalyzes the reversible transfer of the terminal phosphate of ATP to form a long-chain polyphosphate (polyP). The chain is Polyphosphate kinase from Burkholderia lata (strain ATCC 17760 / DSM 23089 / LMG 22485 / NCIMB 9086 / R18194 / 383).